We begin with the raw amino-acid sequence, 471 residues long: 6-phosphogluconate dehydrogenase, decarboxylating (471 aa).

NADP(+) contacts are provided by residues Gly10–Gly15, Asn33–Thr35, Val75–Ala77, and Asn103. Residues Asn103 and Ser129 to Gly131 contribute to the substrate site. Catalysis depends on Lys183, which acts as the Proton acceptor. His186–Asn187 is a binding site for substrate. Catalysis depends on Glu190, which acts as the Proton donor. Tyr191, Lys263, Arg290, Arg449, and His455 together coordinate substrate.

This sequence belongs to the 6-phosphogluconate dehydrogenase family. As to quaternary structure, homodimer.

The enzyme catalyses 6-phospho-D-gluconate + NADP(+) = D-ribulose 5-phosphate + CO2 + NADPH. The protein operates within carbohydrate degradation; pentose phosphate pathway; D-ribulose 5-phosphate from D-glucose 6-phosphate (oxidative stage): step 3/3. Functionally, catalyzes the oxidative decarboxylation of 6-phosphogluconate to ribulose 5-phosphate and CO(2), with concomitant reduction of NADP to NADPH. The protein is 6-phosphogluconate dehydrogenase, decarboxylating (gnd) of Synechococcus elongatus (strain ATCC 33912 / PCC 7942 / FACHB-805) (Anacystis nidulans R2).